The primary structure comprises 275 residues: 2,3,4,5-tetrahydropyridine-2,6-dicarboxylate N-succinyltransferase (275 aa).

Arginine 106 and aspartate 143 together coordinate substrate.

It belongs to the transferase hexapeptide repeat family. As to quaternary structure, homotrimer.

Its subcellular location is the cytoplasm. It catalyses the reaction (S)-2,3,4,5-tetrahydrodipicolinate + succinyl-CoA + H2O = (S)-2-succinylamino-6-oxoheptanedioate + CoA. It participates in amino-acid biosynthesis; L-lysine biosynthesis via DAP pathway; LL-2,6-diaminopimelate from (S)-tetrahydrodipicolinate (succinylase route): step 1/3. In Burkholderia pseudomallei (strain 1106a), this protein is 2,3,4,5-tetrahydropyridine-2,6-dicarboxylate N-succinyltransferase.